We begin with the raw amino-acid sequence, 127 residues long: UPF0716 protein YtzA (127 aa).

4 consecutive transmembrane segments (helical) span residues 3–22 (FLFL…FLFL), 26–46 (IGIL…AAAA), 70–90 (AIAD…PGFL), and 93–115 (LAGA…FKWL).

The protein belongs to the UPF0716 (FxsA) family.

The protein localises to the cell membrane. The sequence is that of UPF0716 protein YtzA (ytzA) from Bacillus subtilis (strain 168).